We begin with the raw amino-acid sequence, 61 residues long: Small ribosomal subunit protein uS14 (61 aa).

Residues cysteine 24, cysteine 27, cysteine 40, and cysteine 43 each coordinate Zn(2+).

This sequence belongs to the universal ribosomal protein uS14 family. Zinc-binding uS14 subfamily. Part of the 30S ribosomal subunit. Contacts proteins S3 and S10. Zn(2+) serves as cofactor.

Functionally, binds 16S rRNA, required for the assembly of 30S particles and may also be responsible for determining the conformation of the 16S rRNA at the A site. This is Small ribosomal subunit protein uS14 from Geobacillus stearothermophilus (Bacillus stearothermophilus).